Here is a 242-residue protein sequence, read N- to C-terminus: Probable transcriptional regulatory protein EF_0663 (242 aa).

The span at 1 to 14 (MSGHSKWSNIQGRK) shows a compositional bias: polar residues. Positions 1–22 (MSGHSKWSNIQGRKNAQDAKRG) are disordered.

It belongs to the TACO1 family.

It localises to the cytoplasm. This Enterococcus faecalis (strain ATCC 700802 / V583) protein is Probable transcriptional regulatory protein EF_0663.